The following is a 455-amino-acid chain: MTQPLHVIILAAGAGKRMKSVLPKVLQPIAGQPMLAHVIAAARELEPAAIHVVYGHGGEAVRQHFAGQPDLQWAEQAQQLGTGHAVAQAMPQVPDAAQVLVLYGDVPLIRAQTLRDLLAQPGRLAVLVAEMDDPTGYGRVLRDAEGKVGSIVEQKDANDDQLRVRTINTGIIAAESTALRRWLSQLSNSNAQGEYYLTDVFAFAAHEYTPAEMALVADAQEAEGANDPWQLSQLERAWQRRAVRALCAQGARVRDPARLDIRGTVSVGNDVLIDVDVVLEGNIVLGDGVTIGPFNRLKDVNLGPGTEVRAHCDLEGVITEGAAQVGPFARLRPGTVLADGVHVGNFVETKKVTLGVGSKANHLTYLGDAVIGSKVNIGAGTITCNYDGVNKSTTTIGDNAFIGSNSSLVAPVTIGDSATIAAGSVITRDAPDGKLTLARARQETIDGWKRPLKKS.

Residues 1–228 form a pyrophosphorylase region; the sequence is MTQPLHVIIL…AQEAEGANDP (228 aa). Residues 10–13, lysine 24, glutamine 76, 81–82, 103–105, glycine 138, glutamate 153, asparagine 168, and asparagine 226 contribute to the UDP-N-acetyl-alpha-D-glucosamine site; these read LAAG, GT, and YGD. Aspartate 105 is a binding site for Mg(2+). Residue asparagine 226 participates in Mg(2+) binding. Residues 229-249 are linker; sequence WQLSQLERAWQRRAVRALCAQ. Residues 250 to 455 form an N-acetyltransferase region; it reads GARVRDPARL…DGWKRPLKKS (206 aa). 2 residues coordinate UDP-N-acetyl-alpha-D-glucosamine: arginine 332 and lysine 350. The active-site Proton acceptor is histidine 362. UDP-N-acetyl-alpha-D-glucosamine-binding residues include tyrosine 365 and asparagine 376. Acetyl-CoA-binding positions include alanine 379, 385–386, serine 404, alanine 422, and arginine 439; that span reads NY.

This sequence in the N-terminal section; belongs to the N-acetylglucosamine-1-phosphate uridyltransferase family. It in the C-terminal section; belongs to the transferase hexapeptide repeat family. In terms of assembly, homotrimer. It depends on Mg(2+) as a cofactor.

It localises to the cytoplasm. It carries out the reaction alpha-D-glucosamine 1-phosphate + acetyl-CoA = N-acetyl-alpha-D-glucosamine 1-phosphate + CoA + H(+). It catalyses the reaction N-acetyl-alpha-D-glucosamine 1-phosphate + UTP + H(+) = UDP-N-acetyl-alpha-D-glucosamine + diphosphate. It functions in the pathway nucleotide-sugar biosynthesis; UDP-N-acetyl-alpha-D-glucosamine biosynthesis; N-acetyl-alpha-D-glucosamine 1-phosphate from alpha-D-glucosamine 6-phosphate (route II): step 2/2. The protein operates within nucleotide-sugar biosynthesis; UDP-N-acetyl-alpha-D-glucosamine biosynthesis; UDP-N-acetyl-alpha-D-glucosamine from N-acetyl-alpha-D-glucosamine 1-phosphate: step 1/1. It participates in bacterial outer membrane biogenesis; LPS lipid A biosynthesis. Its function is as follows. Catalyzes the last two sequential reactions in the de novo biosynthetic pathway for UDP-N-acetylglucosamine (UDP-GlcNAc). The C-terminal domain catalyzes the transfer of acetyl group from acetyl coenzyme A to glucosamine-1-phosphate (GlcN-1-P) to produce N-acetylglucosamine-1-phosphate (GlcNAc-1-P), which is converted into UDP-GlcNAc by the transfer of uridine 5-monophosphate (from uridine 5-triphosphate), a reaction catalyzed by the N-terminal domain. This Stenotrophomonas maltophilia (strain R551-3) protein is Bifunctional protein GlmU.